Reading from the N-terminus, the 1658-residue chain is Cortactin-binding protein 2 (1658 aa).

Disordered regions lie at residues 1–24, 203–235, 348–437, 451–475, and 495–612; these read MATDGASCEPDFSRAPEDAAGATA, KTKTSALEEELSAEKRRSTEMEAQMEKQLSEFD, GAAL…LHPG, GNANDPDQNGNTTQSPPSRDVSPTS, and RFTS…PPKP. The stretch at 119-276 forms a coiled coil; sequence RKMQERMSTQ…EQLKRGNDSK (158 aa). Residues 214–235 are compositionally biased toward basic and acidic residues; it reads SAEKRRSTEMEAQMEKQLSEFD. The segment covering 385 to 394 has biased composition (low complexity); sequence GPSAGSASST. Residues 399–418 are compositionally biased toward polar residues; sequence NSTAPPTVQTPGIAPQSYSQ. Arginine 495 is subject to Asymmetric dimethylarginine. Positions 509–520 are enriched in low complexity; the sequence is AAPTGDGGTCPP. Residues 580–590 are compositionally biased toward polar residues; that stretch reads TMASPPSSLPQ. ANK repeat units follow at residues 706 to 736, 740 to 769, 773 to 802, 806 to 835, 839 to 868, and 909 to 939; these read GRPTLLQQAATQGNVTLLSMLLNEEGLDINY, DGHSALYSAAKNGHTDCVRLLLNAGAQVNA, NGFTPLCAAAAQGHFKCVELLISYDANINH, EGQTPLYLACKNGNKECIQLLLEAGTDRSV, DGWTPVHAAVDTGNVDSLKLLMYHRAPACR, and EGWTAAHIAASKGFKNCLEILCMHGGLEPER. Residues 1448–1478 form a disordered region; the sequence is ESGAWRKVSTSPRKKSGRFSPPSWNKPGLSE. Serine 1521 is modified (phosphoserine). Disordered regions lie at residues 1538-1595 and 1611-1642; these read RSES…NSQS and PRSKVTQCSQNTKRSSSSSNTRQIEINNNTKE. Over residues 1539–1558 the composition is skewed to basic and acidic residues; the sequence is SESDISKIADSRDDLRRFDG. 2 stretches are compositionally biased toward polar residues: residues 1559–1569 and 1581–1595; these read SRNNPAFSTVN and PLSSHETTECSNSQS. The segment covering 1619 to 1633 has biased composition (low complexity); it reads SQNTKRSSSSSNTRQ.

In terms of assembly, interacts with CTTN/cortactin SH3 domain. Interacts with STRN, STRN4/zinedin and MOB4/phocein; this interactions mediate the association with the STRIPAK core complex and may regulate dendritic spine distribution of the STRIPAK complex in hippocampal neurons. Activation of glutamate receptors weakens the interaction with STRN and STRN4.

The protein resides in the cytoplasm. Its subcellular location is the cell cortex. The protein localises to the cell projection. It is found in the dendritic spine. Its function is as follows. Regulates the dendritic spine distribution of CTTN/cortactin in hippocampal neurons, and thus controls dendritic spinogenesis and dendritic spine maintenance. Associates with the striatin-interacting phosphatase and kinase (STRIPAK) core complex to regulate dendritic spine distribution of the STRIPAK complex in hippocampal neurons. The protein is Cortactin-binding protein 2 (CTTNBP2) of Neofelis nebulosa (Clouded leopard).